A 1213-amino-acid polypeptide reads, in one-letter code: Probable ATP-binding protein BrxC (1213 aa).

This sequence belongs to the BrxC family.

Its function is as follows. BREX systems (bacteriophage exclusion) provide immunity against bacteriophage. Part of a type 1 BREX system which protects against dsDNA phage. This system allows phage adsorption but prevents phage DNA replication, without degradation of the phage DNA. Methylation of bacterial DNA by PglX guides self/non-self discrimination. When the brxA-brxB-brxC-pglX-pglZ-brxL genes are transformed into a susceptible E.coli strain (BW25113) they confer very high resistance to infection by bacteriophage VR7 and VpaE1, about 100-fold protection against lambda, T5 and T7 and no protection against RNA phage Qbeta, ssDNA phage M13 or dSDNA phage T4 and VR5. Glycosylated phage DNA is not susceptible to BREX. The BREX system does not confer resistance to lysogenic lambda phage, i.e. prophage that are integrated into the chromosomal DNA and then induced to form phage. This Escherichia coli O9:H4 (strain HS) protein is Probable ATP-binding protein BrxC.